A 263-amino-acid polypeptide reads, in one-letter code: 4-hydroxy-tetrahydrodipicolinate reductase (263 aa).

Residue 10 to 15 participates in NAD(+) binding; sequence GASGKM. NADP(+) is bound at residue R38. Residues 97–99 and 123–126 contribute to the NAD(+) site; these read GTT and APNF. The active-site Proton donor/acceptor is H153. H154 contacts (S)-2,3,4,5-tetrahydrodipicolinate. The active-site Proton donor is the K157. 163 to 164 contributes to the (S)-2,3,4,5-tetrahydrodipicolinate binding site; the sequence is GT.

Belongs to the DapB family.

The protein localises to the cytoplasm. It carries out the reaction (S)-2,3,4,5-tetrahydrodipicolinate + NAD(+) + H2O = (2S,4S)-4-hydroxy-2,3,4,5-tetrahydrodipicolinate + NADH + H(+). The catalysed reaction is (S)-2,3,4,5-tetrahydrodipicolinate + NADP(+) + H2O = (2S,4S)-4-hydroxy-2,3,4,5-tetrahydrodipicolinate + NADPH + H(+). It participates in amino-acid biosynthesis; L-lysine biosynthesis via DAP pathway; (S)-tetrahydrodipicolinate from L-aspartate: step 4/4. Catalyzes the conversion of 4-hydroxy-tetrahydrodipicolinate (HTPA) to tetrahydrodipicolinate. This is 4-hydroxy-tetrahydrodipicolinate reductase from Dehalococcoides mccartyi (strain ATCC BAA-2266 / KCTC 15142 / 195) (Dehalococcoides ethenogenes (strain 195)).